Here is a 229-residue protein sequence, read N- to C-terminus: Uracil-DNA glycosylase (229 aa).

Asp70 acts as the Proton acceptor in catalysis.

Belongs to the uracil-DNA glycosylase (UDG) superfamily. UNG family.

It is found in the cytoplasm. It carries out the reaction Hydrolyzes single-stranded DNA or mismatched double-stranded DNA and polynucleotides, releasing free uracil.. In terms of biological role, excises uracil residues from the DNA which can arise as a result of misincorporation of dUMP residues by DNA polymerase or due to deamination of cytosine. The chain is Uracil-DNA glycosylase from Chlamydia felis (strain Fe/C-56) (Chlamydophila felis).